Consider the following 317-residue polypeptide: Melanocyte-stimulating hormone receptor (317 aa).

The Extracellular segment spans residues 1-37 (MAVQGSQRRLLGSLNSTPTAIPQLGLAANQTGARCLE). N29 carries N-linked (GlcNAc...) asparagine glycosylation. A helical transmembrane segment spans residues 38 to 63 (VSIPDGLFLSLGLVSLVENMLVVATI). Over 64–72 (AKNRNLHSP) the chain is Cytoplasmic. Residues 73 to 93 (MYCFICCLALSDLLVSGSNVL) form a helical membrane-spanning segment. The Extracellular segment spans residues 94-118 (ETAVILLLEAGALVARAAVLQQVDN). The chain crosses the membrane as a helical span at residues 119 to 140 (VIDVITCSSMLSSLCFLGAIAV). At 141-163 (DRYISIFYALRYHSIVTLPRARR) the chain is on the cytoplasmic side. A helical transmembrane segment spans residues 164–183 (AIAAIWVASVLFSTLFIAYC). Over 184-191 (DHTAVLLC) the chain is Extracellular. The helical transmembrane segment at 192–211 (LVVFFLAVLVLMAVLYVHML) threads the bilayer. Topologically, residues 212-240 (ARACQHAQGIARLHKRQRPVHQGFGLKGA) are cytoplasmic. The chain crosses the membrane as a helical span at residues 241 to 266 (VTLTILLGIFFLCWGPFFLHLTLIVL). Residues 267 to 279 (CPEHPTCGCIFKN) lie on the Extracellular side of the membrane. The helical transmembrane segment at 280–300 (FNLFLALIICNAIIDPLIYAF) threads the bilayer. Residues 301 to 317 (HSQELRRTLKEVLTCSW) are Cytoplasmic-facing. C315 carries S-palmitoyl cysteine lipidation.

It belongs to the G-protein coupled receptor 1 family. Interacts with MGRN1, but does not undergo MGRN1-mediated ubiquitination; this interaction competes with GNAS-binding and thus inhibits agonist-induced cAMP production. Interacts with OPN3; the interaction results in a decrease in MC1R-mediated cAMP signaling and ultimately a decrease in melanin production in melanocytes.

It is found in the cell membrane. Receptor for MSH (alpha, beta and gamma) and ACTH. The activity of this receptor is mediated by G proteins which activate adenylate cyclase. Mediates melanogenesis, the production of eumelanin (black/brown) and phaeomelanin (red/yellow), via regulation of cAMP signaling in melanocytes. The polypeptide is Melanocyte-stimulating hormone receptor (MC1R) (Pan troglodytes (Chimpanzee)).